The sequence spans 303 residues: ATP-dependent Clp protease ATP-binding subunit CLPT3, chloroplastic (303 aa).

Residues 1–37 (MLLANAPHNGCSRLQQVTLLRASGAKLHRKRALTVVA) constitute a chloroplast transit peptide. Disordered regions lie at residues 185 to 214 (ASTE…RDSD) and 278 to 303 (RDDN…DEYE).

Belongs to the ClpA/ClpB family.

The protein localises to the plastid. It is found in the chloroplast. Accessory protein regulating the assembly of the plastid Clp protease system. The sequence is that of ATP-dependent Clp protease ATP-binding subunit CLPT3, chloroplastic from Chlamydomonas reinhardtii (Chlamydomonas smithii).